The following is a 2399-amino-acid chain: Norsolorinic acid synthase (2399 aa).

A starter unit:ACP transacylase (SAT) domain region spans residues 10 to 247; that stretch reads LVFGDQTYDF…RQIPIYVPAH (238 aa). A Ketosynthase family 3 (KS3) domain is found at 372–805; sequence KSKLAIVSMS…GGNTALLIED (434 aa). Residues C544, H679, and H722 each act as for beta-ketoacyl synthase activity in the active site. The segment at 905–1192 is malonyl-CoA:ACP transacylase (MAT) domain; that stretch reads FAFTGQGSQY…LCGMIKNILG (288 aa). Catalysis depends on S995, which acts as the For acyl/malonyl transferase activity. Residues 1307 to 1327 are disordered; it reads VQEAPAAKTETKKMSKLDPTK. Residues 1315–1327 are compositionally biased toward basic and acidic residues; it reads TETKKMSKLDPTK. Residues 1340–1483 form an N-terminal hotdog fold region; that stretch reads HKVIEEKTEP…CTVRFTTDSQ (144 aa). One can recognise a PKS/mFAS DH domain in the interval 1340–1658; the sequence is HKVIEEKTEP…LRSVPRKALR (319 aa). A product template (PT) domain region spans residues 1353–1658; it reads QFTVETDISR…LRSVPRKALR (306 aa). The active-site Proton acceptor; for dehydratase activity is H1372. A C-terminal hotdog fold region spans residues 1510–1658; the sequence is LTHYNTKSGY…LRSVPRKALR (149 aa). Catalysis depends on D1570, which acts as the Proton donor; for dehydratase activity. Residues 1665–1734 form a disordered region; the sequence is MDKGIRQRGG…AALKASVPKA (70 aa). The segment covering 1677-1698 has biased composition (low complexity); sequence GAAKGAVAAPAPAKKMVEPVKA. Pro residues predominate over residues 1708–1723; it reads AAPPSPSKAAPPPAPK. Residues 1724 to 1734 show a composition bias toward low complexity; sequence PAALKASVPKA. Carrier domains lie at 1733–1812, 1877–1953, and 2020–2099; these read KADP…AGAA, SKVF…GGSG, and VART…TGSS. O-(pantetheine 4'-phosphoryl)serine occurs at positions 1770, 1911, and 2057. Low complexity predominate over residues 2098–2115; it reads SSADSDSSSVASNPADPA. The tract at residues 2098–2149 is disordered; it reads SSADSDSSSVASNPADPAATPPRSESSDTEPDDEAPSKPKSGPGSTDSCRST. Positions 2140–2149 are enriched in polar residues; sequence PGSTDSCRST. Residues 2164–2393 form a thioesterase/Claisen cyclase (TE/CLC) domain region; sequence TLFLLPDGGG…KARVNYVSDL (230 aa). Residue S2234 is the For thioesterase activity of the active site.

Pantetheine 4'-phosphate is required as a cofactor.

The enzyme catalyses hexanoyl-[ACP] + 7 malonyl-CoA + 6 H(+) = noranthrone + holo-[ACP] + 7 CO2 + 7 CoA + 2 H2O. It functions in the pathway mycotoxin biosynthesis. Functionally, polyketide synthase; part of the fragmented gene cluster that mediates the biosynthesis of dothistromin (DOTH), a polyketide toxin very similar in structure to the aflatoxin precursor, versicolorin B. The first step of the pathway is the conversion of acetate to norsolorinic acid (NOR) and requires the fatty acid synthase subunits hexA and hexB, as well as the polyketide synthase pksA. PksA combines a hexanoyl starter unit and 7 malonyl-CoA extender units to synthesize the precursor NOR. The hexanoyl starter unit is provided to the acyl-carrier protein (ACP) domain by the fungal fatty acid synthase hexA/hexB. The second step is the conversion of NOR to averantin (AVN) and requires the norsolorinic acid ketoreductase nor1, which catalyzes the dehydration of norsolorinic acid to form (1'S)-averantin. The cytochrome P450 monooxygenase avnA then catalyzes the hydroxylation of AVN to 5'hydroxyaverantin (HAVN). The next step is performed by adhA that transforms HAVN to averufin (AVF). Averufin might then be converted to hydroxyversicolorone by cypX and avfA. Hydroxyversicolorone is further converted versiconal hemiacetal acetate (VHA) by moxY. VHA is then the substrate for the versiconal hemiacetal acetate esterase est1 to yield versiconal (VAL). Versicolorin B synthase vbsA then converts VAL to versicolorin B (VERB) by closing the bisfuran ring. Then, the activity of the versicolorin B desaturase verB leads to versicolorin A (VERA). DotB, a predicted chloroperoxidase, may perform epoxidation of the A-ring of VERA. Alternatively, a cytochrome P450, such as cypX or avnA could catalyze this step. It is also possible that another, uncharacterized, cytochrome P450 enzyme is responsible for this step. Opening of the epoxide could potentially be achieved by the epoxide hydrolase epoA. However, epoA seems not to be required for DOTH biosynthesis, but other epoxide hydrolases may have the ability to complement this hydrolysis. Alternatively, opening of the epoxide ring could be achieved non-enzymatically. The next step is the deoxygenation of ring A to yield the 5,8-dihydroxyanthraquinone which is most likely catalyzed by the NADPH dehydrogenase encoded by ver1. The last stages of DOTH biosynthesis are proposed to involve hydroxylation of the bisfuran. OrdB and norB might have oxidative roles here. An alternative possibility is that cytochrome P450 monoogenases such as avnA and cypX might perform these steps in addition to previously proposed steps. This chain is Norsolorinic acid synthase, found in Dothistroma septosporum (Red band needle blight fungus).